The following is a 928-amino-acid chain: Arf guanine nucleotide exchange factor sec74 (928 aa).

2 stretches are compositionally biased toward polar residues: residues 1-12 (MDESSRIASSSA) and 57-83 (TITSDTPKVSSQHSPVSSAYTGDSTTD). Disordered stretches follow at residues 1–152 (MDES…RPSS) and 227–249 (SLSSNFSARTPASNQSSVSEDFG). The residue at position 67 (S67) is a Phosphoserine. Composition is skewed to low complexity over residues 89-102 (GHSSSQKLSNKVSS) and 115-132 (SKSSSSQCSSPFLPTSSS). An SEC7 domain is found at 228–420 (LSSNFSARTP…ECFYDNITYT (193 aa)). A compositionally biased stretch (polar residues) spans 234–245 (ARTPASNQSSVS). The region spanning 548–677 (KVFKLGILIQ…WLVKINFVST (130 aa)) is the PH domain.

It is found in the cytoplasm. Its subcellular location is the cell tip. In terms of biological role, guanine nucleotide exchange factor for Arf GTPases, stimulating the nucleotide exchange from the GDP-bound to the GTP-bound form. Involved in vesicular transport. The sequence is that of Arf guanine nucleotide exchange factor sec74 (sec74) from Schizosaccharomyces pombe (strain 972 / ATCC 24843) (Fission yeast).